The primary structure comprises 459 residues: V-type ATP synthase beta chain (459 aa).

It belongs to the ATPase alpha/beta chains family.

Functionally, produces ATP from ADP in the presence of a proton gradient across the membrane. The V-type beta chain is a regulatory subunit. This Thermoanaerobacter sp. (strain X514) protein is V-type ATP synthase beta chain.